The following is a 263-amino-acid chain: 3-methyl-2-oxobutanoate hydroxymethyltransferase (263 aa).

2 residues coordinate Mg(2+): aspartate 45 and aspartate 84. Residues 45-46 (DS), aspartate 84, and lysine 112 contribute to the 3-methyl-2-oxobutanoate site. Glutamate 114 contributes to the Mg(2+) binding site. Residue glutamate 181 is the Proton acceptor of the active site.

Belongs to the PanB family. As to quaternary structure, homodecamer; pentamer of dimers. Requires Mg(2+) as cofactor.

The protein resides in the cytoplasm. The enzyme catalyses 3-methyl-2-oxobutanoate + (6R)-5,10-methylene-5,6,7,8-tetrahydrofolate + H2O = 2-dehydropantoate + (6S)-5,6,7,8-tetrahydrofolate. Its pathway is cofactor biosynthesis; (R)-pantothenate biosynthesis; (R)-pantoate from 3-methyl-2-oxobutanoate: step 1/2. In terms of biological role, catalyzes the reversible reaction in which hydroxymethyl group from 5,10-methylenetetrahydrofolate is transferred onto alpha-ketoisovalerate to form ketopantoate. The chain is 3-methyl-2-oxobutanoate hydroxymethyltransferase from Chromohalobacter salexigens (strain ATCC BAA-138 / DSM 3043 / CIP 106854 / NCIMB 13768 / 1H11).